Here is a 340-residue protein sequence, read N- to C-terminus: Chitinase 2 (340 aa).

The N-terminal stretch at 1-32 (MSTPRAAASLAKKAALVALAVLAAALATAARA) is a signal peptide. Positions 33–73 (EQCGAQAGGARCPNCLCCSRWGWCGTTSDFCGDGCQSQCSG) constitute a Chitin-binding type-1 domain. 8 cysteine pairs are disulfide-bonded: Cys35/Cys50, Cys44/Cys56, Cys47/Cys74, Cys49/Cys63, Cys67/Cys71, Cys110/Cys172, Cys184/Cys192, and Cys291/Cys323. The Proton donor role is filled by Glu154.

It belongs to the glycosyl hydrolase 19 family. Chitinase class I subfamily. In terms of tissue distribution, expressed in roots, sheaths and meristems.

The catalysed reaction is Random endo-hydrolysis of N-acetyl-beta-D-glucosaminide (1-&gt;4)-beta-linkages in chitin and chitodextrins.. Functionally, hydrolyzes chitin and plays a role in defense against fungal pathogens containing chitin. Its overexpression confers enhanced resistance to sheath blight pathogen (R.solani). In Oryza sativa subsp. japonica (Rice), this protein is Chitinase 2 (Cht2).